Here is a 380-residue protein sequence, read N- to C-terminus: 1-deoxy-D-xylulose 5-phosphate reductoisomerase (380 aa).

The NADPH site is built by Thr10, Gly11, Ser12, Ile13, Gly36, Arg37, Asn38, and Asn120. A 1-deoxy-D-xylulose 5-phosphate-binding site is contributed by Lys121. Residue Glu122 participates in NADPH binding. Residue Asp146 coordinates Mn(2+). Residues Ser147, Glu148, Ser172, and His195 each contribute to the 1-deoxy-D-xylulose 5-phosphate site. Residue Glu148 coordinates Mn(2+). Gly201 lines the NADPH pocket. The 1-deoxy-D-xylulose 5-phosphate site is built by Ser208, Asn213, Lys214, and Glu217. A Mn(2+)-binding site is contributed by Glu217.

It belongs to the DXR family. Mg(2+) serves as cofactor. The cofactor is Mn(2+).

It carries out the reaction 2-C-methyl-D-erythritol 4-phosphate + NADP(+) = 1-deoxy-D-xylulose 5-phosphate + NADPH + H(+). Its pathway is isoprenoid biosynthesis; isopentenyl diphosphate biosynthesis via DXP pathway; isopentenyl diphosphate from 1-deoxy-D-xylulose 5-phosphate: step 1/6. Functionally, catalyzes the NADPH-dependent rearrangement and reduction of 1-deoxy-D-xylulose-5-phosphate (DXP) to 2-C-methyl-D-erythritol 4-phosphate (MEP). The sequence is that of 1-deoxy-D-xylulose 5-phosphate reductoisomerase from Listeria welshimeri serovar 6b (strain ATCC 35897 / DSM 20650 / CCUG 15529 / CIP 8149 / NCTC 11857 / SLCC 5334 / V8).